A 433-amino-acid polypeptide reads, in one-letter code: Serine hydroxymethyltransferase (433 aa).

Residues Leu-132 and 136 to 138 contribute to the (6S)-5,6,7,8-tetrahydrofolate site; that span reads GHL. Lys-241 carries the N6-(pyridoxal phosphate)lysine modification.

This sequence belongs to the SHMT family. In terms of assembly, homodimer. The cofactor is pyridoxal 5'-phosphate.

Its subcellular location is the cytoplasm. The enzyme catalyses (6R)-5,10-methylene-5,6,7,8-tetrahydrofolate + glycine + H2O = (6S)-5,6,7,8-tetrahydrofolate + L-serine. It participates in one-carbon metabolism; tetrahydrofolate interconversion. It functions in the pathway amino-acid biosynthesis; glycine biosynthesis; glycine from L-serine: step 1/1. Functionally, catalyzes the reversible interconversion of serine and glycine with tetrahydrofolate (THF) serving as the one-carbon carrier. This reaction serves as the major source of one-carbon groups required for the biosynthesis of purines, thymidylate, methionine, and other important biomolecules. Also exhibits THF-independent aldolase activity toward beta-hydroxyamino acids, producing glycine and aldehydes, via a retro-aldol mechanism. This chain is Serine hydroxymethyltransferase, found in Nitrobacter winogradskyi (strain ATCC 25391 / DSM 10237 / CIP 104748 / NCIMB 11846 / Nb-255).